Here is a 312-residue protein sequence, read N- to C-terminus: Methionyl-tRNA formyltransferase (312 aa).

Residue 110–113 participates in (6S)-5,6,7,8-tetrahydrofolate binding; the sequence is SLLP.

The protein belongs to the Fmt family.

The enzyme catalyses L-methionyl-tRNA(fMet) + (6R)-10-formyltetrahydrofolate = N-formyl-L-methionyl-tRNA(fMet) + (6S)-5,6,7,8-tetrahydrofolate + H(+). Functionally, attaches a formyl group to the free amino group of methionyl-tRNA(fMet). The formyl group appears to play a dual role in the initiator identity of N-formylmethionyl-tRNA by promoting its recognition by IF2 and preventing the misappropriation of this tRNA by the elongation apparatus. This chain is Methionyl-tRNA formyltransferase, found in Koribacter versatilis (strain Ellin345).